The sequence spans 120 residues: Ribonuclease P protein component (120 aa).

This sequence belongs to the RnpA family. As to quaternary structure, consists of a catalytic RNA component (M1 or rnpB) and a protein subunit.

The catalysed reaction is Endonucleolytic cleavage of RNA, removing 5'-extranucleotides from tRNA precursor.. RNaseP catalyzes the removal of the 5'-leader sequence from pre-tRNA to produce the mature 5'-terminus. It can also cleave other RNA substrates such as 4.5S RNA. The protein component plays an auxiliary but essential role in vivo by binding to the 5'-leader sequence and broadening the substrate specificity of the ribozyme. This Blochmanniella floridana protein is Ribonuclease P protein component.